The primary structure comprises 119 residues: Large ribosomal subunit protein uL22c (119 aa).

The protein belongs to the universal ribosomal protein uL22 family. In terms of assembly, part of the 50S ribosomal subunit.

It localises to the plastid. The protein resides in the chloroplast. This protein binds specifically to 23S rRNA. Functionally, the globular domain of the protein is located near the polypeptide exit tunnel on the outside of the subunit, while an extended beta-hairpin is found that lines the wall of the exit tunnel in the center of the 70S ribosome. In Chaetosphaeridium globosum (Charophycean green alga), this protein is Large ribosomal subunit protein uL22c (rpl22).